Reading from the N-terminus, the 270-residue chain is 3-methyl-2-oxobutanoate hydroxymethyltransferase (270 aa).

2 residues coordinate Mg(2+): Asp43 and Asp82. 3-methyl-2-oxobutanoate-binding positions include 43-44 (DS), Asp82, and Lys112. Mg(2+) is bound at residue Glu114. Glu179 acts as the Proton acceptor in catalysis.

The protein belongs to the PanB family. As to quaternary structure, homodecamer; pentamer of dimers. Mg(2+) serves as cofactor.

It localises to the cytoplasm. It carries out the reaction 3-methyl-2-oxobutanoate + (6R)-5,10-methylene-5,6,7,8-tetrahydrofolate + H2O = 2-dehydropantoate + (6S)-5,6,7,8-tetrahydrofolate. It functions in the pathway cofactor biosynthesis; (R)-pantothenate biosynthesis; (R)-pantoate from 3-methyl-2-oxobutanoate: step 1/2. Its function is as follows. Catalyzes the reversible reaction in which hydroxymethyl group from 5,10-methylenetetrahydrofolate is transferred onto alpha-ketoisovalerate to form ketopantoate. The sequence is that of 3-methyl-2-oxobutanoate hydroxymethyltransferase from Oceanobacillus iheyensis (strain DSM 14371 / CIP 107618 / JCM 11309 / KCTC 3954 / HTE831).